The sequence spans 460 residues: Argininosuccinate lyase (460 aa).

It belongs to the lyase 1 family. Argininosuccinate lyase subfamily.

Its subcellular location is the cytoplasm. It catalyses the reaction 2-(N(omega)-L-arginino)succinate = fumarate + L-arginine. The protein operates within amino-acid biosynthesis; L-arginine biosynthesis; L-arginine from L-ornithine and carbamoyl phosphate: step 3/3. This chain is Argininosuccinate lyase, found in Rhodopirellula baltica (strain DSM 10527 / NCIMB 13988 / SH1).